Reading from the N-terminus, the 600-residue chain is Prostaglandin G/H synthase 1 (600 aa).

Positions Met1–Pro24 are cleaved as a signal peptide. Residues Pro32–Thr70 form the EGF-like domain. 4 disulfide bridges follow: Cys36–Cys47, Cys37–Cys159, Cys41–Cys57, and Cys59–Cys69. N-linked (GlcNAc...) asparagine glycosylation is found at Asn68, Asn104, and Asn144. The active-site Proton acceptor is His207. Tyr385 acts as the For cyclooxygenase activity in catalysis. Residue His388 coordinates heme b. Asn410 is a glycosylation site (N-linked (GlcNAc...) asparagine). An intrachain disulfide couples Cys569 to Cys575.

It belongs to the prostaglandin G/H synthase family. As to quaternary structure, homodimer. Requires heme b as cofactor.

The protein localises to the microsome membrane. Its subcellular location is the endoplasmic reticulum membrane. It carries out the reaction (5Z,8Z,11Z,14Z)-eicosatetraenoate + AH2 + 2 O2 = prostaglandin H2 + A + H2O. It catalyses the reaction (5Z,8Z,11Z,14Z)-eicosatetraenoate + 2 O2 = prostaglandin G2. The catalysed reaction is prostaglandin G2 + AH2 = prostaglandin H2 + A + H2O. The enzyme catalyses (9Z,12Z)-octadecadienoate + AH2 + O2 = (9R)-hydroxy-(10E,12Z)-octadecadienoate + A + H2O. It carries out the reaction (9Z,12Z)-octadecadienoate + AH2 + O2 = (9S)-hydroxy-(10E,12Z)-octadecadienoate + A + H2O. It catalyses the reaction (9Z,12Z)-octadecadienoate + AH2 + O2 = (13S)-hydroxy-(9Z,11E)-octadecadienoate + A + H2O. The catalysed reaction is (9Z,12Z)-octadecadienoate + AH2 + O2 = (13R)-hydroxy-(9Z,11E)-octadecadienoate + A + H2O. It participates in lipid metabolism; prostaglandin biosynthesis. Its activity is regulated as follows. The cyclooxygenase activity is inhibited by nonsteroidal anti-inflammatory drugs (NSAIDs) including ibuprofen, flurbiprofen, ketoprofen, naproxen, flurbiprofen, anirolac, fenclofenac and diclofenac. Its function is as follows. Dual cyclooxygenase and peroxidase that plays an important role in the biosynthesis pathway of prostanoids, a class of C20 oxylipins mainly derived from arachidonate ((5Z,8Z,11Z,14Z)-eicosatetraenoate, AA, C20:4(n-6)), with a particular role in the inflammatory response. The cyclooxygenase activity oxygenates AA to the hydroperoxy endoperoxide prostaglandin G2 (PGG2), and the peroxidase activity reduces PGG2 to the hydroxy endoperoxide prostaglandin H2 (PGH2), the precursor of all 2-series prostaglandins and thromboxanes. This complex transformation is initiated by abstraction of hydrogen at carbon 13 (with S-stereochemistry), followed by insertion of molecular O2 to form the endoperoxide bridge between carbon 9 and 11 that defines prostaglandins. The insertion of a second molecule of O2 (bis-oxygenase activity) yields a hydroperoxy group in PGG2 that is then reduced to PGH2 by two electrons. Involved in the constitutive production of prostanoids in particular in the stomach and platelets. In gastric epithelial cells, it is a key step in the generation of prostaglandins, such as prostaglandin E2 (PGE2), which plays an important role in cytoprotection. In platelets, it is involved in the generation of thromboxane A2 (TXA2), which promotes platelet activation and aggregation, vasoconstriction and proliferation of vascular smooth muscle cells. Can also use linoleate (LA, (9Z,12Z)-octadecadienoate, C18:2(n-6)) as substrate and produce hydroxyoctadecadienoates (HODEs) in a regio- and stereospecific manner, being (9R)-HODE ((9R)-hydroxy-(10E,12Z)-octadecadienoate) and (13S)-HODE ((13S)-hydroxy-(9Z,11E)-octadecadienoate) its major products. This chain is Prostaglandin G/H synthase 1 (PTGS1), found in Bos taurus (Bovine).